A 60-amino-acid chain; its full sequence is uncharacterized protein (60 aa).

The chain crosses the membrane as a helical span at residues 27 to 49; it reads YYWLVSTARMVLGVTILILILIG.

The protein resides in the membrane. This is an uncharacterized protein from Archaeoglobus fulgidus (strain ATCC 49558 / DSM 4304 / JCM 9628 / NBRC 100126 / VC-16).